Consider the following 236-residue polypeptide: 5'-methylthioadenosine/S-adenosylhomocysteine nucleosidase (236 aa).

The Proton acceptor role is filled by Glu12. Substrate-binding positions include Gly78, Ile153, and 174–175; that span reads ME. Asp198 functions as the Proton donor in the catalytic mechanism.

It belongs to the PNP/UDP phosphorylase family. MtnN subfamily.

The enzyme catalyses S-adenosyl-L-homocysteine + H2O = S-(5-deoxy-D-ribos-5-yl)-L-homocysteine + adenine. It carries out the reaction S-methyl-5'-thioadenosine + H2O = 5-(methylsulfanyl)-D-ribose + adenine. It catalyses the reaction 5'-deoxyadenosine + H2O = 5-deoxy-D-ribose + adenine. The protein operates within amino-acid biosynthesis; L-methionine biosynthesis via salvage pathway; S-methyl-5-thio-alpha-D-ribose 1-phosphate from S-methyl-5'-thioadenosine (hydrolase route): step 1/2. Its function is as follows. Catalyzes the irreversible cleavage of the glycosidic bond in both 5'-methylthioadenosine (MTA) and S-adenosylhomocysteine (SAH/AdoHcy) to adenine and the corresponding thioribose, 5'-methylthioribose and S-ribosylhomocysteine, respectively. Also cleaves 5'-deoxyadenosine, a toxic by-product of radical S-adenosylmethionine (SAM) enzymes, into 5-deoxyribose and adenine. This is 5'-methylthioadenosine/S-adenosylhomocysteine nucleosidase from Shewanella baltica (strain OS223).